The following is a 159-amino-acid chain: Peripheral myelin protein 22 (159 aa).

Residue methionine 1 is a topological domain, cytoplasmic. A helical transmembrane segment spans residues 2 to 31 (LLLLLGIIVLHVAVLVLLFVATIVSQWIVG). Over 32–64 (NGHATDLWQNCSTTSGNVQHCLSSSANEWLQSV) the chain is Extracellular. A glycan (N-linked (GlcNAc...) asparagine) is linked at asparagine 41. The chain crosses the membrane as a helical span at residues 65-91 (QATMILSIIFSVLSLFLFFCQLFTLTK). Residues 92 to 95 (GGRF) are Cytoplasmic-facing. Residues 96–119 (YITGIFQILAGLCVMSAASIYTVR) traverse the membrane as a helical segment. Residues 120–133 (HPEWHLDSAYSYGF) are Extracellular-facing. Residues 134–156 (AYILAWVAFPLALLSGVVYVILR) traverse the membrane as a helical segment. Over 157-159 (KRE) the chain is Cytoplasmic.

This sequence belongs to the PMP-22/EMP/MP20 family. In terms of processing, ubiquitinated by the DCX(DCAF13) E3 ubiquitin ligase complex, leading to its degradation.

It localises to the cell membrane. In terms of biological role, might be involved in growth regulation, and in myelinization in the peripheral nervous system. The chain is Peripheral myelin protein 22 (PMP22) from Equus caballus (Horse).